A 304-amino-acid chain; its full sequence is Secreted mono- and diacylglycerol lipase MDL3 (304 aa).

Residues 1 to 19 (MIVGPVISLLLSYFVLVSG) form the signal peptide. The cysteines at positions 55 and 297 are disulfide-linked. The N-linked (GlcNAc...) asparagine glycan is linked to N161. S171 acts as the Nucleophile in catalysis. Active-site residues include D228 and H281.

The protein belongs to the AB hydrolase superfamily. Lipase family. Class 3 subfamily.

The protein localises to the secreted. It localises to the cell wall. The catalysed reaction is a monoacylglycerol + H2O = glycerol + a fatty acid + H(+). It catalyses the reaction a diacylglycerol + H2O = a monoacylglycerol + a fatty acid + H(+). Functionally, secreted lipase involved in Dandruff and seborrheic dermatitis (D/SD) probably via lipase-mediated breakdown of sebaceous lipids and release of irritating free fatty acids. Shows activity against monoglyceride and diglyceride substrates, but not triglyceride substrates and does not exhibit regio-selective production of diacylglycerols. Hydrolyzes distearin, dilinolein, dipalmitoylglycerol and dipalmitolein. Cleaves oleic acid from 1,2 isomers of diolein on both the 1 and the 2 position of the glycerol backbone, resulting mainly in free fatty acids but no monoolein is detected. Shows activity on monoolein and liberates mostly free fatty acids, but can also perform the reverse reaction and produce diolein. The protein is Secreted mono- and diacylglycerol lipase MDL3 of Malassezia globosa (strain ATCC MYA-4612 / CBS 7966) (Dandruff-associated fungus).